Here is a 214-residue protein sequence, read N- to C-terminus: Orotate phosphoribosyltransferase (214 aa).

Residue K26 coordinates 5-phospho-alpha-D-ribose 1-diphosphate. 34–35 serves as a coordination point for orotate; the sequence is FF. 5-phospho-alpha-D-ribose 1-diphosphate contacts are provided by residues 72–73, R99, K100, K103, H105, and 124–132; these read YK and DDVITAGTA. T128 and R156 together coordinate orotate.

This sequence belongs to the purine/pyrimidine phosphoribosyltransferase family. PyrE subfamily. As to quaternary structure, homodimer. It depends on Mg(2+) as a cofactor.

The enzyme catalyses orotidine 5'-phosphate + diphosphate = orotate + 5-phospho-alpha-D-ribose 1-diphosphate. The protein operates within pyrimidine metabolism; UMP biosynthesis via de novo pathway; UMP from orotate: step 1/2. Functionally, catalyzes the transfer of a ribosyl phosphate group from 5-phosphoribose 1-diphosphate to orotate, leading to the formation of orotidine monophosphate (OMP). The chain is Orotate phosphoribosyltransferase from Pasteurella multocida (strain Pm70).